The primary structure comprises 864 residues: Probable LRR receptor-like serine/threonine-protein kinase At1g07550 (864 aa).

An N-terminal signal peptide occupies residues 1-23 (MDTCTRLLFAACATLSILHLVQS). At 24-507 (QNQQGFISLD…SCGTRFPTAA (484 aa)) the chain is on the extracellular side. N-linked (GlcNAc...) asparagine glycosylation is found at Asn-49, Asn-229, Asn-256, Asn-289, Asn-432, Asn-445, and Asn-464. LRR repeat units lie at residues 411–434 (RIVK…QNLT), 435–457 (QLQE…LAKM), and 459–480 (YLLV…ALLD). The helical transmembrane segment at 508–528 (VAASVSAVAIIILVLVLIFVL) threads the bilayer. Residues 529–864 (RRRKPSAGKV…VDTEINPKAR (336 aa)) lie on the Cytoplasmic side of the membrane. Thr-551 is modified (phosphothreonine). Positions 560 to 831 (NNFQVVIGKG…QVVHVLNECL (272 aa)) constitute a Protein kinase domain. Residues 566–574 (IGKGGFGVV) and Lys-587 each bind ATP. Tyr-632 is modified (phosphotyrosine). Residue Asp-684 is the Proton acceptor of the active site. 2 positions are modified to phosphothreonine: Thr-718 and Thr-723. Position 731 is a phosphotyrosine (Tyr-731).

This sequence belongs to the protein kinase superfamily. Ser/Thr protein kinase family.

The protein resides in the membrane. The catalysed reaction is L-seryl-[protein] + ATP = O-phospho-L-seryl-[protein] + ADP + H(+). It carries out the reaction L-threonyl-[protein] + ATP = O-phospho-L-threonyl-[protein] + ADP + H(+). The protein is Probable LRR receptor-like serine/threonine-protein kinase At1g07550 of Arabidopsis thaliana (Mouse-ear cress).